Consider the following 818-residue polypeptide: Glycerol-3-phosphate acyltransferase (818 aa).

Residues 305–310 carry the HXXXXD motif motif; the sequence is CHRSHM.

It belongs to the GPAT/DAPAT family.

It is found in the cell inner membrane. It carries out the reaction sn-glycerol 3-phosphate + an acyl-CoA = a 1-acyl-sn-glycero-3-phosphate + CoA. Its pathway is phospholipid metabolism; CDP-diacylglycerol biosynthesis; CDP-diacylglycerol from sn-glycerol 3-phosphate: step 1/3. The protein is Glycerol-3-phosphate acyltransferase of Edwardsiella ictaluri (strain 93-146).